A 369-amino-acid chain; its full sequence is D-alanine--D-alanine ligase (369 aa).

The ATP-grasp domain maps to 152–359 (KKLFAAEGLP…YPSLLATMVE (208 aa)). Position 180-235 (180-235 (RERLGLPVFVKPARGGSSIGVSRVSSWDELDAAVAAARDHDPKVIVEAAIAGRELE)) interacts with ATP. Mg(2+) contacts are provided by Asp-314, Glu-326, and Asn-328.

Belongs to the D-alanine--D-alanine ligase family. Mg(2+) is required as a cofactor. Requires Mn(2+) as cofactor.

It is found in the cytoplasm. The catalysed reaction is 2 D-alanine + ATP = D-alanyl-D-alanine + ADP + phosphate + H(+). Its pathway is cell wall biogenesis; peptidoglycan biosynthesis. Cell wall formation. The sequence is that of D-alanine--D-alanine ligase from Mycobacterium avium (strain 104).